Consider the following 417-residue polypeptide: Tyrosine--tRNA ligase (417 aa).

Y39 lines the L-tyrosine pocket. The 'HIGH' region signature appears at 44 to 53 (PTAPSLHAGG). L-tyrosine contacts are provided by Y176 and Q180. A 'KMSKS' region motif is present at residues 236–240 (KMGKS). Residue K239 participates in ATP binding. The 68-residue stretch at 350–417 (IGVLALMVLA…KKRHVLIRPA (68 aa)) folds into the S4 RNA-binding domain.

Belongs to the class-I aminoacyl-tRNA synthetase family. TyrS type 1 subfamily. In terms of assembly, homodimer.

The protein resides in the cytoplasm. The enzyme catalyses tRNA(Tyr) + L-tyrosine + ATP = L-tyrosyl-tRNA(Tyr) + AMP + diphosphate + H(+). Its function is as follows. Catalyzes the attachment of tyrosine to tRNA(Tyr) in a two-step reaction: tyrosine is first activated by ATP to form Tyr-AMP and then transferred to the acceptor end of tRNA(Tyr). This is Tyrosine--tRNA ligase from Brucella abortus (strain 2308).